The primary structure comprises 394 residues: Phosphoglycerate kinase (394 aa).

Substrate contacts are provided by residues 21-23, arginine 36, 59-62, arginine 118, and arginine 151; these read DFN and HLGR. The residue at position 183 (serine 183) is a Phosphoserine. ATP-binding residues include lysine 201 and glycine 292. Threonine 299 bears the Phosphothreonine mark. ATP is bound by residues glutamate 323 and 350–353; that span reads GGDS.

This sequence belongs to the phosphoglycerate kinase family. Monomer.

It localises to the cytoplasm. The catalysed reaction is (2R)-3-phosphoglycerate + ATP = (2R)-3-phospho-glyceroyl phosphate + ADP. The protein operates within carbohydrate degradation; glycolysis; pyruvate from D-glyceraldehyde 3-phosphate: step 2/5. In Bacillus anthracis (strain A0248), this protein is Phosphoglycerate kinase.